The following is a 262-amino-acid chain: tRNA pseudouridine synthase A (262 aa).

Asp-51 serves as the catalytic Nucleophile. Tyr-109 contacts substrate.

Belongs to the tRNA pseudouridine synthase TruA family. Homodimer.

It catalyses the reaction uridine(38/39/40) in tRNA = pseudouridine(38/39/40) in tRNA. Its function is as follows. Formation of pseudouridine at positions 38, 39 and 40 in the anticodon stem and loop of transfer RNAs. This Actinobacillus pleuropneumoniae serotype 7 (strain AP76) protein is tRNA pseudouridine synthase A.